The sequence spans 144 residues: Large ribosomal subunit protein uL16 (144 aa).

It belongs to the universal ribosomal protein uL16 family. As to quaternary structure, part of the 50S ribosomal subunit.

Its function is as follows. Binds 23S rRNA and is also seen to make contacts with the A and possibly P site tRNAs. This chain is Large ribosomal subunit protein uL16, found in Caldanaerobacter subterraneus subsp. tengcongensis (strain DSM 15242 / JCM 11007 / NBRC 100824 / MB4) (Thermoanaerobacter tengcongensis).